Reading from the N-terminus, the 563-residue chain is Arginine--tRNA ligase (563 aa).

Positions 120–130 (PNIAKPFHVGH) match the 'HIGH' region motif.

The protein belongs to the class-I aminoacyl-tRNA synthetase family. As to quaternary structure, monomer.

The protein localises to the cytoplasm. The enzyme catalyses tRNA(Arg) + L-arginine + ATP = L-arginyl-tRNA(Arg) + AMP + diphosphate. The protein is Arginine--tRNA ligase of Clostridium acetobutylicum (strain ATCC 824 / DSM 792 / JCM 1419 / IAM 19013 / LMG 5710 / NBRC 13948 / NRRL B-527 / VKM B-1787 / 2291 / W).